Reading from the N-terminus, the 496-residue chain is D-2-hydroxyglutarate--pyruvate transhydrogenase DLD3 (496 aa).

Residue Lys-17 forms a Glycyl lysine isopeptide (Lys-Gly) (interchain with G-Cter in ubiquitin) linkage. The region spanning 64-243 (YRGQSNLILL…TGVSIVAAAK (180 aa)) is the FAD-binding PCMH-type domain.

This sequence belongs to the FAD-binding oxidoreductase/transferase type 4 family. FAD is required as a cofactor.

Its subcellular location is the cytoplasm. The catalysed reaction is (R)-lactate + 2 Fe(III)-[cytochrome c] = 2 Fe(II)-[cytochrome c] + pyruvate + 2 H(+). It carries out the reaction (R)-2-hydroxyglutarate + pyruvate = (R)-lactate + 2-oxoglutarate. In terms of biological role, catalyzes the reversible oxidation of (R)-2-hydroxyglutarate to 2-oxoglutarate coupled to reduction of pyruvate to (R)-lactate. Can also use oxaloacetate as electron acceptor instead of pyruvate producing (R)-malate. The sequence is that of D-2-hydroxyglutarate--pyruvate transhydrogenase DLD3 (DLD3) from Saccharomyces cerevisiae (strain ATCC 204508 / S288c) (Baker's yeast).